A 294-amino-acid chain; its full sequence is MASSSRLCDSCKSTAATLFCRADAAFLCGDCDGKIHTANKLASRHERVWLCEVCEQAPAHVTCKADAAALCVTCDRDIHSANPLSRRHERVPITPFYDAVGPAKSASSSVNFVDEDGGDVTASWLLAKEGIEITNLFSDLDYPKIEVTSEENSSGNDGVVPVQNKLFLNEDYFNFDLSASKISQQGFNFINQTVSTRTIDVPLVPESGGVTAEMTNTETPAVQLSPAEREARVLRYREKRKNRKFEKTIRYASRKAYAEMRPRIKGRFAKRTDSRENDGGDVGVYGGFGVVPSF.

Zn(2+) contacts are provided by cysteine 8, cysteine 11, cysteine 31, histidine 36, cysteine 51, cysteine 54, cysteine 74, and histidine 79. The B box-type 1; atypical zinc-finger motif lies at 8-50; that stretch reads CDSCKSTAATLFCRADAAFLCGDCDGKIHTANKLASRHERVWL. The B box-type 2; atypical zinc finger occupies 51–93; it reads CEVCEQAPAHVTCKADAAALCVTCDRDIHSANPLSRRHERVPI. The region spanning 229–271 is the CCT domain; it reads REARVLRYREKRKNRKFEKTIRYASRKAYAEMRPRIKGRFAKR.

The protein belongs to the CONSTANS family.

Its subcellular location is the nucleus. This chain is Zinc finger protein CONSTANS-LIKE 3 (COL3), found in Arabidopsis thaliana (Mouse-ear cress).